Here is a 367-residue protein sequence, read N- to C-terminus: UDP-N-acetylglucosamine--N-acetylmuramyl-(pentapeptide) pyrophosphoryl-undecaprenol N-acetylglucosamine transferase (367 aa).

Residues 15 to 17 (TGG), Asn-127, Arg-163, Ser-191, Ile-249, and Gln-294 contribute to the UDP-N-acetyl-alpha-D-glucosamine site.

It belongs to the glycosyltransferase 28 family. MurG subfamily.

The protein resides in the cell inner membrane. The enzyme catalyses di-trans,octa-cis-undecaprenyl diphospho-N-acetyl-alpha-D-muramoyl-L-alanyl-D-glutamyl-meso-2,6-diaminopimeloyl-D-alanyl-D-alanine + UDP-N-acetyl-alpha-D-glucosamine = di-trans,octa-cis-undecaprenyl diphospho-[N-acetyl-alpha-D-glucosaminyl-(1-&gt;4)]-N-acetyl-alpha-D-muramoyl-L-alanyl-D-glutamyl-meso-2,6-diaminopimeloyl-D-alanyl-D-alanine + UDP + H(+). The protein operates within cell wall biogenesis; peptidoglycan biosynthesis. Its function is as follows. Cell wall formation. Catalyzes the transfer of a GlcNAc subunit on undecaprenyl-pyrophosphoryl-MurNAc-pentapeptide (lipid intermediate I) to form undecaprenyl-pyrophosphoryl-MurNAc-(pentapeptide)GlcNAc (lipid intermediate II). The sequence is that of UDP-N-acetylglucosamine--N-acetylmuramyl-(pentapeptide) pyrophosphoryl-undecaprenol N-acetylglucosamine transferase from Burkholderia pseudomallei (strain 1710b).